We begin with the raw amino-acid sequence, 136 residues long: Congerin-2 (136 aa).

Serine 2 is subject to N-acetylserine. A Galectin domain is found at 4 to 136 (RAEVRNIPFK…DARLTFVRLE (133 aa)). 70–76 (WQQEERS) is a binding site for a beta-D-galactoside.

In terms of assembly, homodimer.

This protein binds beta-galactoside. Its physiological function is not yet known. This Conger myriaster (Conger eel) protein is Congerin-2.